Reading from the N-terminus, the 273-residue chain is Tyrosinase (273 aa).

Residues 1–18 form the signal peptide; sequence MCLLALGFLLGILQPASG. Residues N86 and N169 are each glycosylated (N-linked (GlcNAc...) asparagine). Residues H180, H202, and H211 each contribute to the Cu cation site. A glycan (N-linked (GlcNAc...) asparagine) is linked at N230.

The protein belongs to the tyrosinase family. Cu(2+) is required as a cofactor.

It localises to the melanosome membrane. The catalysed reaction is 2 L-dopa + O2 = 2 L-dopaquinone + 2 H2O. It carries out the reaction L-tyrosine + O2 = L-dopaquinone + H2O. In terms of biological role, this is a copper-containing oxidase that functions in the formation of pigments such as melanins and other polyphenolic compounds. The chain is Tyrosinase (TYR) from Pelodiscus sinensis (Chinese softshell turtle).